We begin with the raw amino-acid sequence, 166 residues long: NAD(P)H-quinone oxidoreductase subunit I, chloroplastic (166 aa).

2 consecutive 4Fe-4S ferredoxin-type domains span residues 55-84 and 95-124; these read GRIH…VDWK and LNYS…MTEE. [4Fe-4S] cluster is bound by residues Cys64, Cys67, Cys70, Cys74, Cys104, Cys107, Cys110, and Cys114.

Belongs to the complex I 23 kDa subunit family. In terms of assembly, NDH is composed of at least 16 different subunits, 5 of which are encoded in the nucleus. [4Fe-4S] cluster is required as a cofactor.

It localises to the plastid. The protein localises to the chloroplast thylakoid membrane. The enzyme catalyses a plastoquinone + NADH + (n+1) H(+)(in) = a plastoquinol + NAD(+) + n H(+)(out). It carries out the reaction a plastoquinone + NADPH + (n+1) H(+)(in) = a plastoquinol + NADP(+) + n H(+)(out). In terms of biological role, NDH shuttles electrons from NAD(P)H:plastoquinone, via FMN and iron-sulfur (Fe-S) centers, to quinones in the photosynthetic chain and possibly in a chloroplast respiratory chain. The immediate electron acceptor for the enzyme in this species is believed to be plastoquinone. Couples the redox reaction to proton translocation, and thus conserves the redox energy in a proton gradient. The chain is NAD(P)H-quinone oxidoreductase subunit I, chloroplastic from Calea megacephala.